The sequence spans 101 residues: A-type ATP synthase subunit F (101 aa).

It belongs to the V-ATPase F subunit family. In terms of assembly, has multiple subunits with at least A(3), B(3), C, D, E, F, H, I and proteolipid K(x).

Its subcellular location is the cell membrane. In terms of biological role, component of the A-type ATP synthase that produces ATP from ADP in the presence of a proton gradient across the membrane. This Archaeoglobus fulgidus (strain ATCC 49558 / DSM 4304 / JCM 9628 / NBRC 100126 / VC-16) protein is A-type ATP synthase subunit F.